A 528-amino-acid chain; its full sequence is (R)-citramalate synthase (528 aa).

One can recognise a Pyruvate carboxyltransferase domain in the interval 5 to 271 (VYIYDTTLRD…IPQENLKKLT (267 aa)).

It belongs to the alpha-IPM synthase/homocitrate synthase family.

The catalysed reaction is pyruvate + acetyl-CoA + H2O = (3R)-citramalate + CoA + H(+). The protein operates within amino-acid biosynthesis; L-isoleucine biosynthesis; 2-oxobutanoate from pyruvate: step 1/3. Catalyzes the condensation of pyruvate and acetyl-coenzyme A to form (R)-citramalate. In Aquifex aeolicus (strain VF5), this protein is (R)-citramalate synthase.